Reading from the N-terminus, the 448-residue chain is Methionine aminopeptidase 2 (448 aa).

Residues methionine 1–alanine 17 show a composition bias toward low complexity. Positions methionine 1–threonine 87 are disordered. Residues lysine 21–glycine 34 show a composition bias toward basic and acidic residues. The segment covering proline 35–threonine 46 has biased composition (acidic residues). The segment covering lysine 55 to threonine 71 has biased composition (basic residues). Histidine 200 is a binding site for substrate. Residues aspartate 220, aspartate 231, and histidine 300 each contribute to the a divalent metal cation site. Histidine 308 provides a ligand contact to substrate. Glutamate 334 and glutamate 429 together coordinate a divalent metal cation.

The protein belongs to the peptidase M24A family. Methionine aminopeptidase eukaryotic type 2 subfamily. Co(2+) serves as cofactor. Requires Zn(2+) as cofactor. The cofactor is Mn(2+). It depends on Fe(2+) as a cofactor.

It localises to the cytoplasm. It carries out the reaction Release of N-terminal amino acids, preferentially methionine, from peptides and arylamides.. In terms of biological role, cotranslationally removes the N-terminal methionine from nascent proteins. The N-terminal methionine is often cleaved when the second residue in the primary sequence is small and uncharged (Met-Ala-, Cys, Gly, Pro, Ser, Thr, or Val). The chain is Methionine aminopeptidase 2 from Malassezia globosa (strain ATCC MYA-4612 / CBS 7966) (Dandruff-associated fungus).